Here is a 117-residue protein sequence, read N- to C-terminus: Eukaryotic translation initiation factor 4E-binding protein 1 (117 aa).

2 stretches are compositionally biased toward polar residues: residues 1–12 and 33–47; these read MSAGSSCSQTPS and YSTTPGGTLFSTTPG. The tract at residues 1-47 is disordered; it reads MSAGSSCSQTPSRAIPTRRVALGDGVQLPPGDYSTTPGGTLFSTTPG. The residue at position 2 (Ser-2) is an N-acetylserine. 2 positions are modified to phosphothreonine: Thr-36 and Thr-40. Ser-43 is subject to Phosphoserine. Phosphothreonine is present on residues Thr-45 and Thr-49. At Tyr-53 the chain carries Phosphotyrosine. Residues 53–59 carry the YXXXXLphi motif motif; that stretch reads YDRKFLM. Lys-56 participates in a covalent cross-link: Glycyl lysine isopeptide (Lys-Gly) (interchain with G-Cter in ubiquitin). Ser-64 carries the post-translational modification Phosphoserine. A disordered region spans residues 64 to 117; it reads SPVAKTPPKDLPAIPGVTSPTSDEPPMQASQSQLPSSPEDKRAGGEESQFEMDI. Residue Thr-69 is modified to Phosphothreonine. The span at 81-99 shows a compositional bias: polar residues; that stretch reads TSPTSDEPPMQASQSQLPS. A phosphoserine mark is found at Ser-82, Ser-95, Ser-99, Ser-100, and Ser-111. A TOS motif motif is present at residues 113-117; the sequence is FEMDI.

This sequence belongs to the eIF4E-binding protein family. Hypophosphorylated EIF4EBP1 competes with EIF4G1/EIF4G3 to interact with EIF4E; insulin stimulated MAP-kinase (MAPK1 and MAPK3) or mTORC1 phosphorylation of EIF4EBP1 causes dissociation of the complex allowing EIF4G1/EIF4G3 to bind and consequent initiation of translation. Interacts (via TOS motif) with RPTOR; promoting phosphorylation by mTORC1. Phosphorylated on serine and threonine residues in response to insulin, EGF and PDGF. Phosphorylation at Thr-36, Thr-45, Ser-64 and Thr-69, corresponding to the hyperphosphorylated form, is regulated by mTORC1 and abolishes binding to EIF4E. Post-translationally, ubiquitinated: when eIF4E levels are low, hypophosphorylated form is ubiquitinated by the BCR(KLHL25) complex, leading to its degradation and serving as a homeostatic mechanism to maintain translation and prevent eIF4E inhibition when eIF4E levels are low. Not ubiquitinated when hyperphosphorylated (at Thr-36, Thr-45, Ser-64 and Thr-69) or associated with eIF4E. In terms of tissue distribution, highest expression in fat cells.

The protein localises to the cytoplasm. The protein resides in the nucleus. Functionally, repressor of translation initiation that regulates EIF4E activity by preventing its assembly into the eIF4F complex: hypophosphorylated form competes with EIF4G1/EIF4G3 and strongly binds to EIF4E, leading to repress translation. In contrast, hyperphosphorylated form dissociates from EIF4E, allowing interaction between EIF4G1/EIF4G3 and EIF4E, leading to initiation of translation. Mediates the regulation of protein translation by hormones, growth factors and other stimuli that signal through the MAP kinase and mTORC1 pathways. This Mus musculus (Mouse) protein is Eukaryotic translation initiation factor 4E-binding protein 1 (Eif4ebp1).